The following is a 378-amino-acid chain: Ferredoxin--NADP reductase, root isozyme, chloroplastic (378 aa).

The segment covering 1 to 17 (MATAVASQVAVSAPAGS) has biased composition (low complexity). Residues 1–27 (MATAVASQVAVSAPAGSDRGLRSSGIQ) are disordered. The transit peptide at 1-62 (MATAVASQVA…PRHANKVLCM (62 aa)) directs the protein to the chloroplast. Residues 93–221 (KEPYTATIVS…TGPSGKIMLL (129 aa)) form the FAD-binding FR-type domain. FAD is bound by residues 153–156 (RLYS), 174–176 (CVR), tyrosine 180, 195–197 (VCS), and threonine 237. 2 residues coordinate NADP(+): serine 156 and arginine 176. Residues threonine 237, 269 to 270 (VA), 299 to 300 (SR), lysine 309, 337 to 338 (GL), and glutamate 376 each bind NADP(+).

The protein belongs to the ferredoxin--NADP reductase type 1 family. It depends on FAD as a cofactor.

The protein localises to the plastid. It is found in the chloroplast. The catalysed reaction is 2 reduced [2Fe-2S]-[ferredoxin] + NADP(+) + H(+) = 2 oxidized [2Fe-2S]-[ferredoxin] + NADPH. The protein operates within energy metabolism; photosynthesis. Functionally, may play a key role in regulating the relative amounts of cyclic and non-cyclic electron flow to meet the demands of the plant for ATP and reducing power. Is involved in nitrate assimilation. The chain is Ferredoxin--NADP reductase, root isozyme, chloroplastic from Oryza sativa subsp. japonica (Rice).